Reading from the N-terminus, the 231-residue chain is Cytidylate kinase (231 aa).

Position 18 to 26 (18 to 26 (GPSGTGKSS)) interacts with ATP.

It belongs to the cytidylate kinase family. Type 1 subfamily.

The protein resides in the cytoplasm. It carries out the reaction CMP + ATP = CDP + ADP. The catalysed reaction is dCMP + ATP = dCDP + ADP. This Streptomyces coelicolor (strain ATCC BAA-471 / A3(2) / M145) protein is Cytidylate kinase.